Here is a 138-residue protein sequence, read N- to C-terminus: uncharacterized protein (138 aa).

The H-T-H motif DNA-binding region spans 17-38; the sequence is LCRNDVAHEAGTNNVQIMRIEK.

This is an uncharacterized protein from Herpetosiphon aurantiacus (Herpetosiphon giganteus).